A 114-amino-acid polypeptide reads, in one-letter code: Fumarate reductase subunit D (114 aa).

Helical transmembrane passes span 27–47 (ICFP…LVPV), 50–70 (IVAF…TIFP), and 94–114 (WVFY…VIAL).

It belongs to the FrdD family. As to quaternary structure, part of an enzyme complex containing four subunits: a flavoprotein (FrdA), an iron-sulfur protein (FrdB), and two hydrophobic anchor proteins (FrdC and FrdD).

Its subcellular location is the cell inner membrane. In terms of biological role, anchors the catalytic components of the fumarate reductase complex to the cell membrane, binds quinones. This Actinobacillus pleuropneumoniae serotype 3 (strain JL03) protein is Fumarate reductase subunit D.